The following is a 1341-amino-acid chain: DNA-directed RNA polymerase subunit beta (1341 aa).

This sequence belongs to the RNA polymerase beta chain family. As to quaternary structure, the RNAP catalytic core consists of 2 alpha, 1 beta, 1 beta' and 1 omega subunit. When a sigma factor is associated with the core the holoenzyme is formed, which can initiate transcription.

It carries out the reaction RNA(n) + a ribonucleoside 5'-triphosphate = RNA(n+1) + diphosphate. DNA-dependent RNA polymerase catalyzes the transcription of DNA into RNA using the four ribonucleoside triphosphates as substrates. The chain is DNA-directed RNA polymerase subunit beta from Blochmanniella pennsylvanica (strain BPEN).